The sequence spans 558 residues: Putative F-box/LRR-repeat protein R542 (558 aa).

Residues 1–47 (MLLNLPYEILLIIFSLIESKKFFKLLSINKEVREFILTMLNQNPKSF) form the F-box domain. LRR repeat units lie at residues 73-105 (KSTI…GLSF), 139-176 (CGKI…NLQC), 177-220 (CMRI…KIDG), 251-284 (LDKL…DLSG), 285-317 (CINL…GLSY), 329-361 (CFRI…GFFY), 369-395 (VVGY…TISD), 420-444 (CNNI…DLRY), 445-477 (CNNI…GISY), and 481-508 (SKKI…VFKT).

The protein is Putative F-box/LRR-repeat protein R542 of Acanthamoeba polyphaga mimivirus (APMV).